The sequence spans 87 residues: Beta-toxin Ct1a (87 aa).

An N-terminal signal peptide occupies residues 1 to 19 (MNSLLMITACLALIGTVWA). Positions 20–85 (KEGYLVNHST…VWPLPKKTCN (66 aa)) constitute an LCN-type CS-alpha/beta domain. 4 disulfide bridges follow: cysteine 31–cysteine 84, cysteine 35–cysteine 60, cysteine 44–cysteine 65, and cysteine 48–cysteine 67. At asparagine 85 the chain carries Asparagine amide.

This sequence belongs to the long (4 C-C) scorpion toxin superfamily. Sodium channel inhibitor family. Beta subfamily. Expressed by the venom gland.

Its subcellular location is the secreted. Beta toxins bind voltage-independently at site-4 of sodium channels (Nav) and shift the voltage of activation toward more negative potentials thereby affecting sodium channel activation and promoting spontaneous and repetitive firing. Is lethal to mice but does not show toxicity to freshwater shrimp and crickets. The polypeptide is Beta-toxin Ct1a (Centruroides tecomanus (Scorpion)).